Consider the following 1443-residue polypeptide: Lysophospholipase NTE1 (1443 aa).

Topologically, residues 1–59 (MEEELAIEDLPRLTGTVSLNNGLLHSIYNETTVFKILRWSLVEIPKYILKLMSKNLEIN) are lumenal. The helical transmembrane segment at 60–80 (LNVSSILIITLLIAAGILVIV) threads the bilayer. The Cytoplasmic segment spans residues 81–1443 (RYKFLTGYSE…RIKMYRRNTM (1363 aa)). Residues 103–118 (ALGQQSTNYPKSTSSG) show a composition bias toward polar residues. Disordered stretches follow at residues 103–122 (ALGQ…LFVE) and 199–251 (KYDE…GKMH). Residues 210 to 235 (EGEEADEDDEEEEKEVGDDGDDEMDV) are compositionally biased toward acidic residues. A nucleoside 3',5'-cyclic phosphate contacts are provided by residues 619–750 (LYKR…LKSL) and 746–871 (KLKS…VASK). One can recognise a PNPLA domain in the interval 1136-1300 (LVLGGGGSRG…LDNLPVMEMK (165 aa)). The short motif at 1140–1145 (GGGSRG) is the GXGXXG element. The GXSXG motif lies at 1167 to 1171 (GTSIG). Ser1169 serves as the catalytic Nucleophile. Asp1287 (proton acceptor) is an active-site residue. A DGA/G motif is present at residues 1287–1289 (DGG).

The protein belongs to the NTE family.

The protein localises to the endoplasmic reticulum membrane. It carries out the reaction a 1-acyl-sn-glycero-3-phosphocholine + H2O = sn-glycerol 3-phosphocholine + a fatty acid + H(+). With respect to regulation, inhibited by organophosphorus esters. In terms of biological role, intracellular phospholipase B that catalyzes the double deacylation of phosphatidylcholine (PC) to glycerophosphocholine (GroPCho). Plays an important role in membrane lipid homeostasis. Responsible for the rapid PC turnover in response to inositol, elevated temperatures, or when choline is present in the growth medium. The sequence is that of Lysophospholipase NTE1 (NTE1) from Lodderomyces elongisporus (strain ATCC 11503 / CBS 2605 / JCM 1781 / NBRC 1676 / NRRL YB-4239) (Yeast).